Consider the following 952-residue polypeptide: Lysosomal alpha-glucosidase (952 aa).

A signal peptide spans 1–27 (MRVRHPPCSRRLLAICALVSLATAALL). Positions 28–69 (GHILLHDFLLVPRELSGSSPVLEETHPAHQQGASRPGPRDAQ) are excised as a propeptide. The interval 47-80 (PVLEETHPAHQQGASRPGPRDAQAHLGRPRAVPT) is disordered. Positions 80 to 131 (TQCDVPPNSRFDCAPDKAITREQCDARGCCYIPAKQGLRGAQMGQPWCFFPP) constitute a P-type domain. Intrachain disulfides connect cysteine 82/cysteine 109, cysteine 92/cysteine 108, and cysteine 103/cysteine 127. 3 N-linked (GlcNAc...) asparagine glycosylation sites follow: asparagine 140, asparagine 233, and asparagine 390. Aspartate 404 is a substrate binding site. Asparagine 470 carries an N-linked (GlcNAc...) asparagine glycan. Aspartate 518 functions as the Nucleophile in the catalytic mechanism. The active site involves glutamate 521. Cysteines 533 and 558 form a disulfide. Residues arginine 600 and aspartate 616 each contribute to the substrate site. A disulfide bond links cysteine 647 and cysteine 658. N-linked (GlcNAc...) asparagine glycosylation is present at asparagine 652. Residue histidine 674 participates in substrate binding. Residues asparagine 882 and asparagine 925 are each glycosylated (N-linked (GlcNAc...) asparagine).

This sequence belongs to the glycosyl hydrolase 31 family.

The protein resides in the lysosome. It is found in the lysosome membrane. The enzyme catalyses Hydrolysis of terminal, non-reducing (1-&gt;4)-linked alpha-D-glucose residues with release of alpha-D-glucose.. Functionally, essential for the degradation of glycogen in lysosomes. Has highest activity on alpha-1,4-linked glycosidic linkages, but can also hydrolyze alpha-1,6-linked glucans. This is Lysosomal alpha-glucosidase (GAA) from Pongo abelii (Sumatran orangutan).